The following is a 403-amino-acid chain: 5,7-dihydroxy-2-methylchromone synthase (403 aa).

H68 provides a ligand contact to CoA. The active site involves C174. Residue C174 is modified to Cysteine sulfinic acid (-SO2H). CoA is bound by residues L277, S281, and 318-321 (GGRA).

Belongs to the thiolase-like superfamily. Chalcone/stilbene synthases family. In terms of assembly, homodimer.

The catalysed reaction is 5 malonyl-CoA + 4 H(+) = 5,7-dihydroxy-2-methyl-4H-chromen-4-one + 5 CO2 + 5 CoA + H2O. The protein operates within secondary metabolite biosynthesis; flavonoid biosynthesis. In terms of biological role, catalyzes the iterative condensations of 5 molecules of malonyl-CoA to produce a pentaketide 5,7-dihydroxy-2-methylchromone. This chain is 5,7-dihydroxy-2-methylchromone synthase, found in Aloe arborescens (Kidachi aloe).